We begin with the raw amino-acid sequence, 415 residues long: Casein kinase I isoform delta (415 aa).

Residues 9-277 form the Protein kinase domain; the sequence is YRLGRKIGSG…YLRQLFRNLF (269 aa). Residues 15–23 and Lys-38 contribute to the ATP site; that span reads IGSGSFGDI. Catalysis depends on Asp-128, which acts as the Proton acceptor. The interval 278–364 is centrosomal localization signal (CLS); it reads HRQGFSYDYV…TSPRPVSGME (87 aa). The span at 301-315 shows a compositional bias: basic and acidic residues; it reads ADDAERERRDREERL. The disordered stretch occupies residues 301 to 415; sequence ADDAERERRD…SSGLQSVVHR (115 aa). Residues 317 to 342 form an autoinhibitory region; it reads HSRNPATRGLPSTASGRLRGTQEVAP. 2 positions are modified to phosphoserine: Ser-328 and Ser-331. Residues 347–358 are compositionally biased toward polar residues; the sequence is TPTSHTANTSPR. Ser-370 bears the Phosphoserine mark. Arg-375 bears the Omega-N-methylarginine mark. Polar residues predominate over residues 380-400; it reads NVSSSDLTGRQDTSRMSTSQI. Ser-382, Ser-383, Ser-384, Pro-401, Ser-407, and Ser-411 each carry phosphoserine.

Belongs to the protein kinase superfamily. CK1 Ser/Thr protein kinase family. Casein kinase I subfamily. Monomer. Component of the circadian core oscillator, which includes the CRY proteins, CLOCK, or NPAS2, BMAL1 or BMAL2, CSNK1D and/or CSNK1E, TIMELESS and the PER proteins. Interacts directly with PER1 and PER2 which may lead to their degradation. Interacts with MAP1A. Interacts with MAPT/TAU, DBNDD2, AIB1/NCOA3 and ESR1. Interacts with AKAP9/AKAP450; this interaction promotes centrosomal subcellular location. Binds to tubulins in mitotic cells upon DNA damage. Interacts with GJA1. Interacts with SNAPIN. Interacts with DNMT1. Interacts with DDX3X; this interaction enhances CSNK1D kinase activity in vitro, but it is unclear whether this interaction is physiologically relevant. Interacts with FAM83A, FAM83B, FAM83E and FAM83H (via DUF1669). In terms of processing, autophosphorylated on serine and threonine residues; this autophosphorylation represses activity. Reactivated by phosphatase-mediated dephosphorylation. May be dephosphorylated by PP1. As to expression, expressed ubiquitously. However, kinase activity is not uniform, with highest kinase activity in splenocytes.

It is found in the cytoplasm. It localises to the nucleus. The protein localises to the cytoskeleton. Its subcellular location is the microtubule organizing center. The protein resides in the centrosome. It is found in the perinuclear region. It localises to the cell membrane. The protein localises to the spindle. Its subcellular location is the golgi apparatus. It carries out the reaction L-seryl-[protein] + ATP = O-phospho-L-seryl-[protein] + ADP + H(+). It catalyses the reaction L-threonyl-[protein] + ATP = O-phospho-L-threonyl-[protein] + ADP + H(+). The catalysed reaction is L-seryl-[tau protein] + ATP = O-phospho-L-seryl-[tau protein] + ADP + H(+). The enzyme catalyses L-threonyl-[tau protein] + ATP = O-phospho-L-threonyl-[tau protein] + ADP + H(+). Exhibits substrate-dependent heparin activation. Drug-mediated inhibition leads to a delay of the oscillations with the magnitude of this effect dependent upon the timing of drug administration. Inhibited by phosphorylation. In terms of biological role, essential serine/threonine-protein kinase that regulates diverse cellular growth and survival processes including Wnt signaling, DNA repair and circadian rhythms. It can phosphorylate a large number of proteins. Casein kinases are operationally defined by their preferential utilization of acidic proteins such as caseins as substrates. Phosphorylates connexin-43/GJA1, MAP1A, SNAPIN, MAPT/TAU, TOP2A, DCK, HIF1A, EIF6, p53/TP53, DVL2, DVL3, ESR1, AIB1/NCOA3, DNMT1, PKD2, YAP1, PER1 and PER2. Central component of the circadian clock. In balance with PP1, determines the circadian period length through the regulation of the speed and rhythmicity of PER1 and PER2 phosphorylation. Controls PER1 and PER2 nuclear transport and degradation. YAP1 phosphorylation promotes its SCF(beta-TRCP) E3 ubiquitin ligase-mediated ubiquitination and subsequent degradation. DNMT1 phosphorylation reduces its DNA-binding activity. Phosphorylation of ESR1 and AIB1/NCOA3 stimulates their activity and coactivation. Phosphorylation of DVL2 and DVL3 regulates WNT3A signaling pathway that controls neurite outgrowth. Phosphorylates NEDD9/HEF1. EIF6 phosphorylation promotes its nuclear export. Triggers down-regulation of dopamine receptors in the forebrain. Activates DCK in vitro by phosphorylation. TOP2A phosphorylation favors DNA cleavable complex formation. May regulate the formation of the mitotic spindle apparatus in extravillous trophoblast. Modulates connexin-43/GJA1 gap junction assembly by phosphorylation. Probably involved in lymphocyte physiology. Regulates fast synaptic transmission mediated by glutamate. This is Casein kinase I isoform delta (Csnk1d) from Mus musculus (Mouse).